The following is a 168-amino-acid chain: Phosphopantetheine adenylyltransferase (168 aa).

Substrate is bound at residue Thr-10. Residues 10 to 11 and His-18 each bind ATP; that span reads TF. Residues Lys-42, Leu-74, and Arg-88 each contribute to the substrate site. ATP contacts are provided by residues 89–91, Glu-99, and 124–130; these read GLR and NSFISST.

The protein belongs to the bacterial CoaD family. As to quaternary structure, homohexamer. The cofactor is Mg(2+).

It localises to the cytoplasm. It catalyses the reaction (R)-4'-phosphopantetheine + ATP + H(+) = 3'-dephospho-CoA + diphosphate. It functions in the pathway cofactor biosynthesis; coenzyme A biosynthesis; CoA from (R)-pantothenate: step 4/5. Reversibly transfers an adenylyl group from ATP to 4'-phosphopantetheine, yielding dephospho-CoA (dPCoA) and pyrophosphate. The chain is Phosphopantetheine adenylyltransferase from Shewanella frigidimarina (strain NCIMB 400).